Consider the following 433-residue polypeptide: Type I acyl-CoA thioesterase mpaH' (433 aa).

An abhydrolase domain region spans residues 58 to 246 (HGVGLPKELY…IKALFGTTAD (189 aa)). Residue V60 participates in substrate binding. S139 (nucleophile) is an active-site residue. F140 is a binding site for substrate. Active-site residues include D163 and H365.

The protein belongs to the AB hydrolase superfamily. MpaH hydrolase family. Homodimer.

The protein localises to the peroxisome matrix. The enzyme catalyses mycophenolyl-CoA + H2O = mycophenolate + CoA + H(+). It participates in secondary metabolite biosynthesis; terpenoid biosynthesis. Its function is as follows. Type I acyl-CoA thioesterase; part of the gene cluster that mediates the biosynthesis of mycophenolic acid (MPA), the first isolated antibiotic natural product in the world obtained from a culture of Penicillium brevicompactum in 1893. MpaH' acts as a peroxisomal acyl-CoA hydrolase that converts MPA-CoA into the final product MPA. The first step of the pathway is the synthesis of 5-methylorsellinic acid (5MOA) by the cytosolic polyketide synthase mpaC. 5MOA is then converted to the phthalide compound 5,7-dihydroxy-4,6-dimethylphthalide (DHMP) by the endoplasmic reticulum-bound cytochrome P450 monooxygenase mpaDE. MpaDE first catalyzes hydroxylation of 5-MOA to 4,6-dihydroxy-2-(hydroxymethyl)-3-methylbenzoic acid (DHMB). MpaDE then acts as a lactone synthase that catalyzes the ring closure to convert DHMB into DHMP. The next step is the prenylation of DHMP by the Golgi apparatus-associated prenyltransferase mpaA to yield farnesyl-DHMP (FDHMP). The ER-bound oxygenase mpaB then mediates the oxidative cleavage the C19-C20 double bond in FDHMP to yield FDHMP-3C via a mycophenolic aldehyde intermediate. The O-methyltransferase mpaG catalyzes the methylation of FDHMP-3C to yield MFDHMP-3C. After the cytosolic methylation of FDHMP-3C, MFDHMP-3C enters into peroxisomes probably via free diffusion due to its low molecular weight. Upon a peroxisomal CoA ligation reaction, catalyzed by a beta-oxidation component enzyme acyl-CoA ligase ACL891, MFDHMP-3C-CoA would then be restricted to peroxisomes for the following beta-oxidation pathway steps. The peroxisomal beta-oxidation machinery than converts MFDHMP-3C-CoA into MPA_CoA, via a beta-oxidation chain-shortening process. Finally mpaH acts as a peroxisomal acyl-CoA hydrolase with high substrate specificity toward MPA-CoA to release the final product MPA. This Penicillium brevicompactum protein is Type I acyl-CoA thioesterase mpaH'.